We begin with the raw amino-acid sequence, 248 residues long: uncharacterized protein (248 aa).

NADP(+) is bound at residue 9-33 (IITGASSGIGKATALLLAEKGAKLV). Residue S141 participates in substrate binding. Y154 acts as the Proton acceptor in catalysis.

The protein belongs to the short-chain dehydrogenases/reductases (SDR) family.

This is an uncharacterized protein from Listeria monocytogenes serovar 1/2a (strain ATCC BAA-679 / EGD-e).